An 877-amino-acid polypeptide reads, in one-letter code: MAKKPVTPASKVAAKQAAVRSRHQEDVFTLDPLIDPIFQKGELRSYLVTEPSPSVLKKRSIHTKEYWMLSSLLLIAFYVRMYNLSNPNSVVFDEVHFGGFARKYILGTFFMDVHPPLAKMLFGAVGAIGGFKGDFEFKSIGDKFPDSTPYIFMRQFPALLGVGTVILCYLTLRQSGVRPIIAYITTFLLIIENSNVTISRYILLDSPLIFFIAAAIYAWKKFEIQIPFTFGWYRSLLATGIALGLALSSKWVGLFTVAWVGFLCIYQLWFLIGDLSVSTKKIWGHFFARGIILLGVPIALYLGFFAIHFQLLNKEGDGGAFMSSAFRAGLQGNKIPRDITEQVGLGSVVTIRHVDTQGGYLHSHEHFYQTGSKQQQITLYPHLDSNNKWLIEPYNGTIHNETFVPLINGMKIRLKHINTGRRLHSHDEKPPVSERDWQKECSCYGYDGFAGDANDDWVVEIVNYRSQKGEAQTFVKAINTIFRLRHAMTGHYLFSSEVKLPEWGFGQQEVTSASQGKRALTHWYIETNENSILPPSEAKIINYPKLSLWQKVVESHKRMWKINQGLTSHHHWQSSPSEWPLLLRGINYWNKEHKQVYLLGNAVTWWAATLSIITFGTYVLVTVFRWHLGTPLSTNKHVFNFNVQTFSYVLGWALHYLPFFIMGRQLFLHHYLPALYFGILALGHFFEIFTGYLTSRSKYFQQVAFVLVGLFSILSLVFYVNYSSLIYGTPWTKASCELTKPFSGWDYNCGTFFDTLGEYDIQEKSLASESEIPTETVVVEAKQTPKAEPKLAKQDDHIESPAAAEPVEEKEVKEEVEQLAPPLAVDFEEETPKVEDPQVADVDASSNDEKSVEEKQQQEQQQEQEQVEDESVHQVQQ.

The N-linked (GlcNAc...) asparagine glycan is linked to asparagine 83. 2 helical membrane passes run 109-129 (FFMD…GAIG) and 150-170 (YIFM…LCYL). A glycan (N-linked (GlcNAc...) asparagine) is linked at asparagine 195. 4 helical membrane passes run 196–216 (VTIS…AAAI), 226–246 (IPFT…LGLA), 252–272 (VGLF…WFLI), and 291–311 (IILL…HFQL). One can recognise an MIR 1 domain in the interval 340–394 (TEQVGLGSVVTIRHVDTQGGYLHSHEHFYQTGSKQQQITLYPHLDSNNKWLIEPY). 2 N-linked (GlcNAc...) asparagine glycosylation sites follow: asparagine 395 and asparagine 400. MIR domains lie at 403-462 (FVPL…VEIV) and 472-528 (QTFV…IETN). 4 helical membrane-spanning segments follow: residues 604–624 (TWWA…VTVF), 643–663 (VQTF…FIMG), 666–686 (LFLH…GHFF), and 700–720 (FQQV…VFYV). A glycan (N-linked (GlcNAc...) asparagine) is linked at asparagine 721. Residues 778–877 (VVEAKQTPKA…EDESVHQVQQ (100 aa)) are disordered. Composition is skewed to basic and acidic residues over residues 783–799 (QTPK…DHIE), 807–816 (VEEKEVKEEV), and 847–857 (NDEKSVEEKQQ).

It belongs to the glycosyltransferase 39 family. As to quaternary structure, PMT1 and PMT2 form a functional heterodimer.

The protein localises to the endoplasmic reticulum membrane. It carries out the reaction a di-trans,poly-cis-dolichyl beta-D-mannosyl phosphate + L-seryl-[protein] = 3-O-(alpha-D-mannosyl)-L-seryl-[protein] + a di-trans,poly-cis-dolichyl phosphate + H(+). It catalyses the reaction a di-trans,poly-cis-dolichyl beta-D-mannosyl phosphate + L-threonyl-[protein] = 3-O-(alpha-D-mannosyl)-L-threonyl-[protein] + a di-trans,poly-cis-dolichyl phosphate + H(+). The protein operates within protein modification; protein glycosylation. In terms of biological role, protein mannosyltransferase (PMT) involved in hyphal growth and drug sensitivity. Transfers mannose from Dol-P-mannose to Ser or Thr residues on proteins. PMT1, PMT2 and PMT4 account for most of the protein-O-glycosylation activity, while PMT5 and PMT6 may specifically modulate a much narrower spectrum of target proteins. Accounts for the O-glycosylation of the cell wall proteins KRE9, PIR2, RHD3, and ALS1, as well as the SEC20 t-SNARE component. O-glycosylation of SEC20 is essential for its stability. Required for filamentation and early phases of biofilm formation. The chain is Dolichyl-phosphate-mannose--protein mannosyltransferase 1 (PMT1) from Candida albicans (strain SC5314 / ATCC MYA-2876) (Yeast).